The following is a 1481-amino-acid chain: Cystic fibrosis transmembrane conductance regulator (1481 aa).

Over 1–77 the chain is Cytoplasmic; it reads MQRSPLEKAS…KLINALRRCF (77 aa). Residues 78 to 98 traverse the membrane as a helical segment; it reads FWRFTFYGILLYLGEVTKAVQ. One can recognise an ABC transmembrane type-1 1 domain in the interval 81–365; that stretch reads FTFYGILLYL…WAVQTWYDSL (285 aa). Over 99-122 the chain is Extracellular; the sequence is PLLLGRIIASYDPDNKTERSIAIY. A helical transmembrane segment spans residues 123–146; the sequence is LGIGLCLLFIVRTLLLHPAIFGLH. Topologically, residues 147–195 are cytoplasmic; that stretch reads HIGMQMRIAMFSLIYKKTLKLSSRVLDKISIGQLVSLLSNNLNKFDEGL. A helical transmembrane segment spans residues 196–216; that stretch reads ALAHFVWIAPLQVALLMGLIW. At 217–222 the chain is on the extracellular side; sequence ELLQAS. Residues 223–243 traverse the membrane as a helical segment; sequence AFCGLGFLIVLALFQAGLGRM. Topologically, residues 244-298 are cytoplasmic; the sequence is MMKYRDQRAGKINERLVITSEMIENIQSVKAYCWEEAMEKMIENLRQTELKLTRK. A helical transmembrane segment spans residues 299 to 319; the sequence is AAYVRYFNSSAFFFSGFFVVF. At 320–339 the chain is on the extracellular side; the sequence is LSVLPYALIKGIALRKIFTT. A helical transmembrane segment spans residues 340-358; the sequence is ISFCIVLRMAVTRQFPWAV. Topologically, residues 359-858 are cytoplasmic; it reads QTWYDSLGAI…YLRYITLHKS (500 aa). ATP is bound by residues W401, S434, 458–465, and Q493; that span reads GSTGAGKT. The ABC transporter 1 domain occupies 423-646; sequence NGDDNLFFSN…RPDFSSKLMG (224 aa). A lipid anchor (S-palmitoyl cysteine) is attached at C524. Phosphoserine is present on residues S549 and S660. The disordered R region stretch occupies residues 654 to 831; that stretch reads SSERRNSILT…EEINEEDLKE (178 aa). A Phosphoserine; by PKA modification is found at S670. S686 carries the post-translational modification Phosphoserine. Residue K688 forms a Glycyl lysine isopeptide (Lys-Gly) (interchain with G-Cter in ubiquitin) linkage. Residues S700 and S712 each carry the phosphoserine modification. Phosphothreonine is present on T717. A phosphoserine mark is found at S737, S753, S768, S790, S795, and S813. A helical transmembrane segment spans residues 859–879; the sequence is LIFVLIWCLVIFLAEVAASLV. Positions 859-1155 constitute an ABC transmembrane type-1 2 domain; the sequence is LIFVLIWCLV…AVNSSIDVDS (297 aa). The Extracellular portion of the chain corresponds to 880 to 918; sequence LLWLLGNTRFQDKGNSTYSRNNSYAVIITNTSSYYVFYI. N-linked (GlcNAc...) asparagine glycans are attached at residues N894, N900, and N909. A discontinuously helical transmembrane segment spans residues 919–939; that stretch reads YVGVADTLLALGFFRGLPLVH. The Cytoplasmic portion of the chain corresponds to 940–990; that stretch reads TLITVSKILHHKMLHSVLQAPMSTLNTLKAGGILNRFSKDIAILDDLLPLT. The chain crosses the membrane as a helical span at residues 991–1011; the sequence is IFDFIQLLLIVIGAIAVVSVL. The Extracellular segment spans residues 1012–1013; it reads QP. Residues 1014-1034 traverse the membrane as a helical segment; it reads YIFLATVPVIAAFILLRAYFL. Over 1035-1095 the chain is Cytoplasmic; sequence QTSQQLKQLE…TASWFLYLST (61 aa). Residues 1096–1116 form a helical membrane-spanning segment; it reads LRWFQMRIEMIFVIFFIAVTF. Topologically, residues 1117 to 1130 are extracellular; that stretch reads ISILTTGEGEGTVG. A helical membrane pass occupies residues 1131–1151; it reads IILTLAMNIMSTLQWAVNSSI. At 1152–1481 the chain is on the cytoplasmic side; the sequence is DVDSLMRSVS…TEEEVQETRL (330 aa). Residues 1211–1444 form the ABC transporter 2 domain; it reads MTIKDLTAKY…KSLFRQAISH (234 aa). Residues Y1220 and 1245–1252 each bind ATP; that span reads GRTGSGKS. An interaction with GORASP2 region spans residues 1387–1481; it reads RALKQAFADC…TEEEVQETRL (95 aa). A lipid anchor (S-palmitoyl cysteine) is attached at C1396. S1445 and S1457 each carry phosphoserine. Residues 1453-1481 are disordered; that stretch reads HRNSSKYKSRPQIASLKEETEEEVQETRL. The span at 1471–1481 shows a compositional bias: acidic residues; the sequence is ETEEEVQETRL. Residues 1479 to 1481 carry the PDZ-binding motif; the sequence is TRL.

It belongs to the ABC transporter superfamily. ABCC family. CFTR transporter (TC 3.A.1.202) subfamily. Monomer; does not require oligomerization for channel activity. May form oligomers in the membrane. Interacts with SLC26A3, SLC26A6 and NHERF1. Interacts with SHANK2. Interacts with MYO6. Interacts (via C-terminus) with GOPC (via PDZ domain); this promotes CFTR internalization and thereby decreases channel activity. Interacts with SLC4A7 through NHERF1. Found in a complex with MYO5B and RAB11A. Interacts with ANO1. Interacts with SLC26A8. Interacts with AHCYL1; the interaction increases CFTR activity. Interacts with CSE1L. The core-glycosylated form interacts with GORASP2 (via PDZ GRASP-type 1 domain) in respone to ER stress. Interacts with MARCHF2; the interaction leads to CFTR ubiqtuitination and degradation. Interacts with ADGRG2. Post-translationally, N-glycosylated. In terms of processing, phosphorylated; cAMP treatment promotes phosphorylation and activates the channel. Dephosphorylation decreases the ATPase activity (in vitro). Phosphorylation at PKA sites activates the channel. Phosphorylation at PKC sites enhances the response to phosphorylation by PKA. Phosphorylated by AMPK; this inhibits channel activity. Ubiquitinated, leading to its degradation in the lysosome. Deubiquitination by USP10 in early endosomes enhances its endocytic recycling to the cell membrane. Ubiquitinated by RNF185 during ER stress. Ubiquitinated by MARCHF2.

The protein resides in the apical cell membrane. It localises to the early endosome membrane. The protein localises to the cell membrane. It is found in the recycling endosome membrane. Its subcellular location is the endoplasmic reticulum membrane. The protein resides in the nucleus. It catalyses the reaction ATP + H2O + closed Cl(-) channel = ADP + phosphate + open Cl(-) channel.. The catalysed reaction is chloride(in) = chloride(out). The enzyme catalyses hydrogencarbonate(in) = hydrogencarbonate(out). It carries out the reaction ATP + H2O = ADP + phosphate + H(+). Epithelial ion channel that plays an important role in the regulation of epithelial ion and water transport and fluid homeostasis. Mediates the transport of chloride ions across the cell membrane. Possesses an intrinsic ATPase activity and utilizes ATP to gate its channel; the passive flow of anions through the channel is gated by cycles of ATP binding and hydrolysis by the ATP-binding domains. The ion channel is also permeable to HCO(3)(-); selectivity depends on the extracellular chloride concentration. Exerts its function also by modulating the activity of other ion channels and transporters. Contributes to the regulation of the pH and the ion content of the epithelial fluid layer. Modulates the activity of the epithelial sodium channel (ENaC) complex, in part by regulating the cell surface expression of the ENaC complex. May regulate bicarbonate secretion and salvage in epithelial cells by regulating the transporter SLC4A7. Can inhibit the chloride channel activity of ANO1. Plays a role in the chloride and bicarbonate homeostasis during sperm epididymal maturation and capacitation. This is Cystic fibrosis transmembrane conductance regulator from Saimiri boliviensis boliviensis (Bolivian squirrel monkey).